The sequence spans 178 residues: CDP-diacylglycerol--glycerol-3-phosphate 3-phosphatidyltransferase (178 aa).

4 helical membrane-spanning segments follow: residues 28–48 (LSSL…GFFA), 88–108 (LIFF…IFLI), 125–145 (LFVS…VNFL), and 147–167 (ILTN…WVDY).

It belongs to the CDP-alcohol phosphatidyltransferase class-I family.

It is found in the cell membrane. It carries out the reaction a CDP-1,2-diacyl-sn-glycerol + sn-glycerol 3-phosphate = a 1,2-diacyl-sn-glycero-3-phospho-(1'-sn-glycero-3'-phosphate) + CMP + H(+). It functions in the pathway phospholipid metabolism; phosphatidylglycerol biosynthesis; phosphatidylglycerol from CDP-diacylglycerol: step 1/2. Its function is as follows. This protein catalyzes the committed step to the synthesis of the acidic phospholipids. The polypeptide is CDP-diacylglycerol--glycerol-3-phosphate 3-phosphatidyltransferase (pgsA) (Aquifex aeolicus (strain VF5)).